A 267-amino-acid chain; its full sequence is 4-hydroxy-tetrahydrodipicolinate reductase (267 aa).

NAD(+) is bound by residues 8–13 (GAAGRM) and Glu-34. NADP(+) is bound at residue Arg-35. NAD(+)-binding positions include 98–100 (GST) and 122–125 (APNM). The active-site Proton donor/acceptor is the His-155. Position 156 (His-156) interacts with (S)-2,3,4,5-tetrahydrodipicolinate. Lys-159 acts as the Proton donor in catalysis. 165 to 166 (GT) provides a ligand contact to (S)-2,3,4,5-tetrahydrodipicolinate.

It belongs to the DapB family.

It is found in the cytoplasm. The catalysed reaction is (S)-2,3,4,5-tetrahydrodipicolinate + NAD(+) + H2O = (2S,4S)-4-hydroxy-2,3,4,5-tetrahydrodipicolinate + NADH + H(+). It carries out the reaction (S)-2,3,4,5-tetrahydrodipicolinate + NADP(+) + H2O = (2S,4S)-4-hydroxy-2,3,4,5-tetrahydrodipicolinate + NADPH + H(+). It participates in amino-acid biosynthesis; L-lysine biosynthesis via DAP pathway; (S)-tetrahydrodipicolinate from L-aspartate: step 4/4. In terms of biological role, catalyzes the conversion of 4-hydroxy-tetrahydrodipicolinate (HTPA) to tetrahydrodipicolinate. The sequence is that of 4-hydroxy-tetrahydrodipicolinate reductase from Geobacter sp. (strain M21).